The chain runs to 208 residues: Uracil phosphoribosyltransferase (208 aa).

5-phospho-alpha-D-ribose 1-diphosphate contacts are provided by residues Arg-78, Arg-103, and 130–138; that span reads DPMLATGGS. Uracil contacts are provided by residues Ile-193 and 198-200; that span reads GDA. Asp-199 is a binding site for 5-phospho-alpha-D-ribose 1-diphosphate.

Belongs to the UPRTase family. It depends on Mg(2+) as a cofactor.

It catalyses the reaction UMP + diphosphate = 5-phospho-alpha-D-ribose 1-diphosphate + uracil. It functions in the pathway pyrimidine metabolism; UMP biosynthesis via salvage pathway; UMP from uracil: step 1/1. Its activity is regulated as follows. Allosterically activated by GTP. Its function is as follows. Catalyzes the conversion of uracil and 5-phospho-alpha-D-ribose 1-diphosphate (PRPP) to UMP and diphosphate. The protein is Uracil phosphoribosyltransferase of Shewanella baltica (strain OS223).